Consider the following 146-residue polypeptide: VHLTDAEKAAVSGLWSKVNVDEIGGEALGRLLVVYPWTQRFFDSFGDLSSPSAVMSNPKVKAHGKKVLNSFSEGLKHLDNLKGTFSSLSELHCDKLHVDPENFKLLGNVIVVVLAHHLGKDFTPAAQAAFQKVVAGVATALAHKYH.

Val-1 bears the N-acetylvaline mark. One can recognise a Globin domain in the interval 2 to 146; that stretch reads HLTDAEKAAV…VATALAHKYH (145 aa). Ser-44 is subject to Phosphoserine. Lys-59 carries the post-translational modification N6-acetyllysine. His-63 lines the heme b pocket. Lys-82 bears the N6-acetyllysine mark. Residue His-92 participates in heme b binding. Cys-93 is subject to S-nitrosocysteine. Position 144 is an N6-acetyllysine (Lys-144).

The protein belongs to the globin family. In terms of assembly, heterotetramer of two alpha chains and two beta chains. As to expression, red blood cells.

In terms of biological role, involved in oxygen transport from the lung to the various peripheral tissues. The chain is Hemoglobin subunit beta (HBB) from Spalax ehrenbergi (Middle East blind mole rat).